Reading from the N-terminus, the 383-residue chain is Acetylornithine deacetylase (383 aa).

H80 contacts Zn(2+). D82 is an active-site residue. D112 lines the Zn(2+) pocket. E144 is a catalytic residue. Zn(2+) contacts are provided by E145, E169, and H355.

Belongs to the peptidase M20A family. ArgE subfamily. As to quaternary structure, homodimer. Zn(2+) is required as a cofactor. Requires Co(2+) as cofactor. The cofactor is glutathione.

It localises to the cytoplasm. The catalysed reaction is N(2)-acetyl-L-ornithine + H2O = L-ornithine + acetate. It participates in amino-acid biosynthesis; L-arginine biosynthesis; L-ornithine from N(2)-acetyl-L-ornithine (linear): step 1/1. Catalyzes the hydrolysis of the amide bond of N(2)-acetylated L-amino acids. Cleaves the acetyl group from N-acetyl-L-ornithine to form L-ornithine, an intermediate in L-arginine biosynthesis pathway, and a branchpoint in the synthesis of polyamines. The protein is Acetylornithine deacetylase of Klebsiella pneumoniae (strain 342).